A 699-amino-acid polypeptide reads, in one-letter code: D-(-)-3-hydroxybutyrate oligomer hydrolase (699 aa).

Positions 1 to 33 (MTAIRGGSRRAPGLALALLGGVLLGACHGDENA) are cleaved as a signal peptide. S311 (charge relay system) is an active-site residue.

It belongs to the D-(-)-3-hydroxybutyrate oligomer hydrolase family.

The protein localises to the secreted. The enzyme catalyses (3R)-hydroxybutanoate dimer + H2O = 2 (R)-3-hydroxybutanoate + H(+). The protein operates within lipid metabolism; butanoate metabolism. Its function is as follows. Participates in the degradation of poly-3-hydroxybutyrate (PHB). It works downstream of poly(3-hydroxybutyrate) depolymerase, hydrolyzing D(-)-3-hydroxybutyrate oligomers of various length (3HB-oligomers) into 3HB-monomers. The chain is D-(-)-3-hydroxybutyrate oligomer hydrolase from Burkholderia pseudomallei (strain 1710b).